The following is a 215-amino-acid chain: tRNA (guanine-N(7)-)-methyltransferase (215 aa).

Positions 43, 68, 95, and 121 each coordinate S-adenosyl-L-methionine. Aspartate 121 is a catalytic residue. Positions 125 and 157 each coordinate substrate.

It belongs to the class I-like SAM-binding methyltransferase superfamily. TrmB family.

It carries out the reaction guanosine(46) in tRNA + S-adenosyl-L-methionine = N(7)-methylguanosine(46) in tRNA + S-adenosyl-L-homocysteine. The protein operates within tRNA modification; N(7)-methylguanine-tRNA biosynthesis. Catalyzes the formation of N(7)-methylguanine at position 46 (m7G46) in tRNA. This is tRNA (guanine-N(7)-)-methyltransferase from Trichormus variabilis (strain ATCC 29413 / PCC 7937) (Anabaena variabilis).